Reading from the N-terminus, the 281-residue chain is Pantothenate synthetase (281 aa).

An ATP-binding site is contributed by 30–37 (MGYLHEGH). His-37 acts as the Proton donor in catalysis. Gln-61 serves as a coordination point for (R)-pantoate. Beta-alanine is bound at residue Gln-61. 147-150 (GEKD) is an ATP binding site. (R)-pantoate is bound at residue Gln-153. ATP contacts are provided by residues Ile-176 and 184 to 187 (KSSR).

The protein belongs to the pantothenate synthetase family. As to quaternary structure, homodimer.

It localises to the cytoplasm. The catalysed reaction is (R)-pantoate + beta-alanine + ATP = (R)-pantothenate + AMP + diphosphate + H(+). It functions in the pathway cofactor biosynthesis; (R)-pantothenate biosynthesis; (R)-pantothenate from (R)-pantoate and beta-alanine: step 1/1. Catalyzes the condensation of pantoate with beta-alanine in an ATP-dependent reaction via a pantoyl-adenylate intermediate. In Clostridium botulinum (strain Langeland / NCTC 10281 / Type F), this protein is Pantothenate synthetase.